The chain runs to 373 residues: D-alanine--D-alanine ligase (373 aa).

One can recognise an ATP-grasp domain in the interval 156–363 (KKLWSAAGLP…YPTLLATMVE (208 aa)). Position 184 to 239 (184 to 239 (LQRLGLPAYVKPARGGSSIGVSRVSSFDELPAAIAAARRHDPKVIVEAAINGRELE)) interacts with ATP. 3 residues coordinate Mg(2+): aspartate 318, glutamate 330, and asparagine 332.

This sequence belongs to the D-alanine--D-alanine ligase family. Requires Mg(2+) as cofactor. The cofactor is Mn(2+).

It localises to the cytoplasm. It catalyses the reaction 2 D-alanine + ATP = D-alanyl-D-alanine + ADP + phosphate + H(+). The protein operates within cell wall biogenesis; peptidoglycan biosynthesis. Its function is as follows. Cell wall formation. This chain is D-alanine--D-alanine ligase, found in Mycobacterium ulcerans (strain Agy99).